We begin with the raw amino-acid sequence, 241 residues long: Probable xyloglucan-specific endo-beta-1,4-glucanase A (241 aa).

Positions 1–18 (MKFNLALALSLTVATAEA) are cleaved as a signal peptide.

The protein belongs to the glycosyl hydrolase 12 (cellulase H) family.

The protein localises to the secreted. The catalysed reaction is xyloglucan + H2O = xyloglucan oligosaccharides.. Its function is as follows. Catalyzes endohydrolysis of 1,4-beta-D-glucosidic linkages in xyloglucan with retention of the beta-configuration of the glycosyl residues. Specific for xyloglucan and does not hydrolyze other cell wall components. The chain is Probable xyloglucan-specific endo-beta-1,4-glucanase A (xgeA) from Aspergillus clavatus (strain ATCC 1007 / CBS 513.65 / DSM 816 / NCTC 3887 / NRRL 1 / QM 1276 / 107).